Here is a 552-residue protein sequence, read N- to C-terminus: Rqc2 homolog RqcH (552 aa).

Coiled-coil stretches lie at residues 271-317 (RDRV…QKGE) and 357-398 (NAQR…MLGQ).

Belongs to the NEMF family. Associates with stalled 50S ribosomal subunits, binds to RqcH. Recombinant protein interacts with the N-terminal 30 kDa of human fibronectin (FN1).

Key component of the ribosome quality control system (RQC), a ribosome-associated complex that mediates the extraction of incompletely synthesized nascent chains from stalled ribosomes and their subsequent degradation. RqcH recruits Ala-charged tRNA, and with RqcP directs the elongation of stalled nascent chains on 50S ribosomal subunits, leading to non-templated C-terminal alanine extensions (Ala tail). The Ala tail promotes nascent chain degradation. May add between 1 and at least 8 Ala residues. Binds to stalled 50S ribosomal subunits. This chain is Rqc2 homolog RqcH, found in Streptococcus suis (strain 05ZYH33).